We begin with the raw amino-acid sequence, 639 residues long: Kinesin-like protein KIF22 (639 aa).

The Kinesin motor domain occupies 18 to 345; it reads RVRVAVRLRP…LNFAAKSKQI (328 aa). Residue 102–109 participates in ATP binding; sequence GPTGAGKT. A disordered region spans residues 358-400; sequence IAALPAMKRPREEAETAAGSRQRKKSKTDSTESSPNTSMDAAS. Over residues 388 to 397 the composition is skewed to polar residues; the sequence is TESSPNTSMD. The stretch at 439–484 forms a coiled coil; it reads KRERMALLKKWEESQMEIERLKEKQKELEQKAIEAEARLEKSTNSD. The Important for regulated proteolytic degradation motif lies at 549–552; that stretch reads GREN.

It belongs to the TRAFAC class myosin-kinesin ATPase superfamily. Kinesin family. In terms of processing, ubiquitinated, leading to its subsequent proteasomal degradation.

The protein localises to the nucleus. It localises to the cytoplasm. The protein resides in the cytoskeleton. Its function is as follows. Kinesin family member that is involved in spindle formation and the movements of chromosomes during mitosis and meiosis. Binds to microtubules and to DNA. The polypeptide is Kinesin-like protein KIF22 (kif22) (Xenopus tropicalis (Western clawed frog)).